The following is a 543-amino-acid chain: MGSKYAAGHYSCSSYFQSLDIPENRQFVQGMKKRYGQDTVISSVMANTYSGIQMILEAIVHLRSTDRKKILNYLYNKTFPSPSGNITIESNHHLSREVRIGQANLDGQFDIVWSSEQPIPAKPLMTNTIIDSANEEQIWKYVVESMGEETADGVLVLDQDQTILYANSAAYSFLRVKQGDILKEEQLREISHQLIKKETSKYGVQLFIFKRAKRGPLLVTKPDKEPYRFGRVVTYNPSFEKELRTASIASQSDANVLILGETGSGKEVLARTIHEQSPRRNGPFVALNAGAIPRELIASELFGYVEGAFTGARKGGRPGKFEVADGGTLFLDEIGDMPLELQVNLLRVLEERKVIRIGDHKERPINVRVIAATNRNLKEEIAYRGSFRSDLYYRLNVFTIHIPPLRDRKEDIETLSLQFLKNFHQHYCGKGTCHLSNSALQLLQSYNWPGNIRELRNVIERAFLLAIDEPEILPIHLPEEIQNANCAIPPSSVNNLKDVEKKMIEQALKESKSLTEAAKKLGITRSTLYRKIKQWKIHKTTFS.

The Sigma-54 factor interaction domain maps to 232–464 (VVTYNPSFEK…LRNVIERAFL (233 aa)). ATP contacts are provided by residues 260–267 (GETGSGKE) and 324–333 (ADGGTLFLDE).

The catalysed reaction is (4S)-limonene + reduced [NADPH--hemoprotein reductase] + O2 = (1S,5R)-carveol + oxidized [NADPH--hemoprotein reductase] + H2O + H(+). It catalyses the reaction (4S)-limonene + reduced [NADPH--hemoprotein reductase] + O2 = (4S)-perillyl alcohol + oxidized [NADPH--hemoprotein reductase] + H2O + H(+). It carries out the reaction perillyl alcohol + NAD(+) = perillyl aldehyde + NADH + H(+). The enzyme catalyses (1S,5R)-carveol + NADP(+) = (R)-carvone + NADPH + H(+). Its function is as follows. Involved in limonene hydroxylation to a mixture of carveol and perillyl alcohol as well as in dehydrogenation of these products to carvone and perillyl aldehyde. Aromatic alcohols containing an isopropyl or isopropenyl group at ring position 4 also served as substrates for the dehydrogenase activity. The chain is Limonene hydroxylase from Geobacillus stearothermophilus (Bacillus stearothermophilus).